Reading from the N-terminus, the 194-residue chain is Large ribosomal subunit protein eL15 (194 aa).

Positions 160 to 194 are disordered; the sequence is RGLTSAGKKGRGLMYKGKGAEKVRPSVRANSKKAK.

The protein belongs to the eukaryotic ribosomal protein eL15 family.

The chain is Large ribosomal subunit protein eL15 from Methanococcus maripaludis (strain C6 / ATCC BAA-1332).